A 64-amino-acid chain; its full sequence is Large ribosomal subunit protein bL35 (64 aa).

This sequence belongs to the bacterial ribosomal protein bL35 family.

The sequence is that of Large ribosomal subunit protein bL35 from Shewanella putrefaciens (strain CN-32 / ATCC BAA-453).